The primary structure comprises 336 residues: MIEADRLISAGTTLPEDVADRAIRPKLLEEYVGQPQVRSQMEIFIKAAKLRGDALDHLLIFGPPGLGKTTLANIVANEMGVNLRTTSGPVLEKAGDLAAMLTNLEPHDVLFIDEIHRLSPVVEEVLYPAMEDYQLDIIIGEGPAARSIKIDLPPFTLIGATTRAGSLTSPLRDRFGIVQRLEFYQVPDLQYIVSRSARFMGLEMSDDGALEVARRARGTPRIANRLLRRVRDFAEVKHDGTISADIAAQALDMLNVDAEGFDYMDRKLLLAVIDKFFGGPVGLDNLAAAIGEERETIEDVLEPYLIQQGFLQRTPRGRMATTRAWNHFGITPPEMP.

The large ATPase domain (RuvB-L) stretch occupies residues 4 to 184; that stretch reads ADRLISAGTT…FGIVQRLEFY (181 aa). Residues I23, R24, G65, K68, T69, T70, 131–133, R174, Y184, and R221 contribute to the ATP site; that span reads EDY. Mg(2+) is bound at residue T69. The interval 185-255 is small ATPAse domain (RuvB-S); that stretch reads QVPDLQYIVS…IAAQALDMLN (71 aa). Residues 258–336 are head domain (RuvB-H); the sequence is AEGFDYMDRK…HFGITPPEMP (79 aa). Positions 294, 313, and 318 each coordinate DNA.

This sequence belongs to the RuvB family. Homohexamer. Forms an RuvA(8)-RuvB(12)-Holliday junction (HJ) complex. HJ DNA is sandwiched between 2 RuvA tetramers; dsDNA enters through RuvA and exits via RuvB. An RuvB hexamer assembles on each DNA strand where it exits the tetramer. Each RuvB hexamer is contacted by two RuvA subunits (via domain III) on 2 adjacent RuvB subunits; this complex drives branch migration. In the full resolvosome a probable DNA-RuvA(4)-RuvB(12)-RuvC(2) complex forms which resolves the HJ.

It localises to the cytoplasm. The catalysed reaction is ATP + H2O = ADP + phosphate + H(+). In terms of biological role, the RuvA-RuvB-RuvC complex processes Holliday junction (HJ) DNA during genetic recombination and DNA repair, while the RuvA-RuvB complex plays an important role in the rescue of blocked DNA replication forks via replication fork reversal (RFR). RuvA specifically binds to HJ cruciform DNA, conferring on it an open structure. The RuvB hexamer acts as an ATP-dependent pump, pulling dsDNA into and through the RuvAB complex. RuvB forms 2 homohexamers on either side of HJ DNA bound by 1 or 2 RuvA tetramers; 4 subunits per hexamer contact DNA at a time. Coordinated motions by a converter formed by DNA-disengaged RuvB subunits stimulates ATP hydrolysis and nucleotide exchange. Immobilization of the converter enables RuvB to convert the ATP-contained energy into a lever motion, pulling 2 nucleotides of DNA out of the RuvA tetramer per ATP hydrolyzed, thus driving DNA branch migration. The RuvB motors rotate together with the DNA substrate, which together with the progressing nucleotide cycle form the mechanistic basis for DNA recombination by continuous HJ branch migration. Branch migration allows RuvC to scan DNA until it finds its consensus sequence, where it cleaves and resolves cruciform DNA. The protein is Holliday junction branch migration complex subunit RuvB of Shigella boydii serotype 18 (strain CDC 3083-94 / BS512).